The chain runs to 330 residues: Intraflagellar transport protein 46 homolog (330 aa).

Disordered stretches follow at residues 1-21 (MDRP…ATPR) and 55-112 (SIKT…EGVY). A compositionally biased stretch (acidic residues) spans 7-16 (ETVDIPDSED). Positions 68-79 (SSSEKLCDRGSS) are enriched in basic and acidic residues. Positions 80-101 (DDDDDDDNDDDEDEDDDDDDEN) are enriched in acidic residues.

This sequence belongs to the IFT46 family.

It localises to the cytoplasm. Its subcellular location is the cytoskeleton. The protein resides in the cilium basal body. The protein localises to the cell projection. It is found in the cilium. Forms part of a complex involved in intraflagellar transport (IFT), the bi-directional movement of particles required for the assembly, maintenance and functioning of primary cilia. The chain is Intraflagellar transport protein 46 homolog from Schistosoma japonicum (Blood fluke).